A 909-amino-acid chain; its full sequence is Protein virilizer (909 aa).

A compositionally biased stretch (polar residues) spans 746-784; it reads STSKNTNTNVSKQQQQPQNSTPCSSNRFLFNKSSLISQE. The tract at residues 746-824 is disordered; that stretch reads STSKNTNTNV…TNMTRQPTTL (79 aa). The segment covering 785–799 has biased composition (low complexity); the sequence is SNGSNNNSGTQGPGS. Residues 800-810 are compositionally biased toward polar residues; the sequence is MNESYSLDNSF. Residues 811 to 824 show a composition bias toward low complexity; that stretch reads NTTNTNMTRQPTTL. Phosphoserine is present on residues Ser856 and Ser898.

Belongs to the vir family. As to quaternary structure, component of the MIS (mRNA N6-methyladenosine (m6A) methylation) complex, at least composed of IME4, KAR4, MUM2, SLZ1, and VIR1. Interacts with KAR4. Interacts with SLZ1. Interacts with MUM2. Interacts with IME4.

The protein localises to the cytoplasm. It localises to the nucleus. Its subcellular location is the nucleolus. Component of the MIS complex, a complex that mediates N6-methyladenosine (m6A) methylation of meiotic mRNAs and is required for initiation of meiosis, progression through the meiotic divisions and sporulation. In the complex, performs a scaffolding role stabilizing the other complex members. This Saccharomyces cerevisiae (strain ATCC 204508 / S288c) (Baker's yeast) protein is Protein virilizer.